The sequence spans 292 residues: Pyridoxal 5'-phosphate synthase subunit PdxS (292 aa).

A D-ribose 5-phosphate-binding site is contributed by Asp-22. Lys-79 functions as the Schiff-base intermediate with D-ribose 5-phosphate in the catalytic mechanism. Residue Gly-151 participates in D-ribose 5-phosphate binding. Arg-163 is a D-glyceraldehyde 3-phosphate binding site. D-ribose 5-phosphate is bound by residues Gly-212 and 233-234 (GS).

It belongs to the PdxS/SNZ family. In the presence of PdxT, forms a dodecamer of heterodimers.

It carries out the reaction aldehydo-D-ribose 5-phosphate + D-glyceraldehyde 3-phosphate + L-glutamine = pyridoxal 5'-phosphate + L-glutamate + phosphate + 3 H2O + H(+). Its pathway is cofactor biosynthesis; pyridoxal 5'-phosphate biosynthesis. In terms of biological role, catalyzes the formation of pyridoxal 5'-phosphate from ribose 5-phosphate (RBP), glyceraldehyde 3-phosphate (G3P) and ammonia. The ammonia is provided by the PdxT subunit. Can also use ribulose 5-phosphate and dihydroxyacetone phosphate as substrates, resulting from enzyme-catalyzed isomerization of RBP and G3P, respectively. The sequence is that of Pyridoxal 5'-phosphate synthase subunit PdxS from Thermoanaerobacter sp. (strain X514).